We begin with the raw amino-acid sequence, 428 residues long: Dihydroorotase (428 aa).

Residues histidine 59 and histidine 61 each coordinate Zn(2+). Substrate contacts are provided by residues 61 to 63 (HLR) and asparagine 93. 3 residues coordinate Zn(2+): aspartate 151, histidine 178, and histidine 231. Asparagine 277 contributes to the substrate binding site. A Zn(2+)-binding site is contributed by aspartate 304. Residue aspartate 304 is part of the active site. Substrate-binding positions include histidine 308 and 322 to 323 (FG).

It belongs to the metallo-dependent hydrolases superfamily. DHOase family. Class I DHOase subfamily. Zn(2+) serves as cofactor.

It carries out the reaction (S)-dihydroorotate + H2O = N-carbamoyl-L-aspartate + H(+). The protein operates within pyrimidine metabolism; UMP biosynthesis via de novo pathway; (S)-dihydroorotate from bicarbonate: step 3/3. Catalyzes the reversible cyclization of carbamoyl aspartate to dihydroorotate. This Bacillus cereus (strain ATCC 14579 / DSM 31 / CCUG 7414 / JCM 2152 / NBRC 15305 / NCIMB 9373 / NCTC 2599 / NRRL B-3711) protein is Dihydroorotase.